A 576-amino-acid chain; its full sequence is Putative export ATP-binding/permease protein RF_0214 (576 aa).

One can recognise an ABC transmembrane type-1 domain in the interval 20–303; it reads LIIVMISLLS…IFELLSEIHL (284 aa). 6 consecutive transmembrane segments (helical) span residues 21–41, 61–81, 135–155, 158–178, 242–262, and 277–297; these read IIVMISLLSVSASLLLIGSVF, ILYICLLIIILSIASFFRSYF, FLSFFIRNSVMLIGGVTLMFF, FKLASIVIITIPILLIPLIKF, ALFFAISIAIIFLAITLVVWI, and IISFIYYAIIAGFSSGGIFEL. Residues 336–572 enclose the ABC transporter domain; the sequence is IEFKNVDFTY…SEIYRNICRE (237 aa). 371 to 378 contacts ATP; that stretch reads GRSGGGKS.

It belongs to the ABC transporter superfamily. In terms of assembly, homodimer.

The protein resides in the cell inner membrane. Its function is as follows. Part of an ABC transporter complex. Transmembrane domains (TMD) form a pore in the inner membrane and the ATP-binding domain (NBD) is responsible for energy generation. The polypeptide is Putative export ATP-binding/permease protein RF_0214 (Rickettsia felis (strain ATCC VR-1525 / URRWXCal2) (Rickettsia azadi)).